Consider the following 397-residue polypeptide: Elongation factor Tu (397 aa).

A tr-type G domain is found at 10-207; it reads KPHLNIGTIG…AVDAYIPEPE (198 aa). Residues 19–26 form a G1 region; it reads GHVDHGKT. 19–26 serves as a coordination point for GTP; it reads GHVDHGKT. Threonine 26 provides a ligand contact to Mg(2+). Residues 60–64 are G2; it reads GVTIN. The segment at 81–84 is G3; that stretch reads DCPG. GTP is bound by residues 81–85 and 136–139; these read DCPGH and NKVD. Positions 136–139 are G4; it reads NKVD. The interval 174–176 is G5; that stretch reads SAL.

This sequence belongs to the TRAFAC class translation factor GTPase superfamily. Classic translation factor GTPase family. EF-Tu/EF-1A subfamily. In terms of assembly, monomer.

It is found in the cytoplasm. The enzyme catalyses GTP + H2O = GDP + phosphate + H(+). GTP hydrolase that promotes the GTP-dependent binding of aminoacyl-tRNA to the A-site of ribosomes during protein biosynthesis. This chain is Elongation factor Tu, found in Syntrophus aciditrophicus (strain SB).